The primary structure comprises 228 residues: Spore wall protein 12 (228 aa).

The N-linked (GlcNAc...) asparagine glycan is linked to Asn117.

The protein belongs to the SWP12 family.

Its subcellular location is the spore wall. This chain is Spore wall protein 12 (SWP12), found in Nosema bombycis (strain CQ1 / CVCC 102059) (Microsporidian parasite).